The following is a 1235-amino-acid chain: Structural maintenance of chromosomes protein 1B (1235 aa).

Residue 32-39 (GPNGSGKS) participates in ATP binding. Residues 156–490 (EEISTSGELI…RSELQNAGID (335 aa)) adopt a coiled-coil conformation. Residues 514-629 (SVFGRLFDLC…ETMEEARHIA (116 aa)) enclose the SMC hinge domain. Residues Lys-648 and Lys-713 each carry the N6-acetyllysine modification. 3 coiled-coil regions span residues 666–934 (WDEK…LDCK), 970–994 (EKEEAFEIDYSSLKEDLKALQSDQE), and 1022–1049 (RALENLKTVRDKFQESTDAFEASRKEAR). Lys-1033 bears the N6-acetyllysine mark.

Belongs to the SMC family. SMC1 subfamily. As to quaternary structure, forms a heterodimer with SMC3. Component of a meiosis-specific cohesin complex, probably composed of the SMC1B and SMC3 heterodimer attached via their SMC hinge domain, RAD21 (or its meiosis-specific related protein REC8), which link them, and STAG3, which interacts with RAD21 or REC8. The cohesin complex interacts with the cohesin loading complex subunits NIPBL/Scc2 (via HEAT repeats) and MAU2/Scc4. NIPBL directly contacts all members of the complex, RAD21, SMC1A/B, SMC3 and STAG1.

It localises to the nucleus. Its subcellular location is the chromosome. The protein localises to the centromere. Functionally, meiosis-specific component of cohesin complex. Required for the maintenance of meiotic cohesion, but not, or only to a minor extent, for its establishment. Contributes to axial element (AE) formation and the organization of chromatin loops along the AE. Plays a key role in synapsis, recombination and chromosome movements. The cohesin complex is required for the cohesion of sister chromatids after DNA replication. The cohesin complex apparently forms a large proteinaceous ring within which sister chromatids can be trapped. At anaphase, the complex is cleaved and dissociates from chromatin, allowing sister chromatids to segregate. The meiosis-specific cohesin complex probably replaces mitosis specific cohesin complex when it dissociates from chromatin during prophase I. The sequence is that of Structural maintenance of chromosomes protein 1B (SMC1B) from Homo sapiens (Human).